Consider the following 201-residue polypeptide: Holliday junction branch migration complex subunit RuvA (201 aa).

The segment at 1–64 (MIGRLHGKII…EDAHLLFGFA (64 aa)) is domain I. The domain II stretch occupies residues 65–143 (QKQDRTLFRE…GVAQSDFFEE (79 aa)). Positions 144-154 (HSVETIVATHS) are flexible linker. The interval 154-201 (SHDPADEARDALVALGYKLADAEKMIKKVNKAGATSEQLIREALKASL) is domain III.

The protein belongs to the RuvA family. Homotetramer. Forms an RuvA(8)-RuvB(12)-Holliday junction (HJ) complex. HJ DNA is sandwiched between 2 RuvA tetramers; dsDNA enters through RuvA and exits via RuvB. An RuvB hexamer assembles on each DNA strand where it exits the tetramer. Each RuvB hexamer is contacted by two RuvA subunits (via domain III) on 2 adjacent RuvB subunits; this complex drives branch migration. In the full resolvosome a probable DNA-RuvA(4)-RuvB(12)-RuvC(2) complex forms which resolves the HJ.

It localises to the cytoplasm. The RuvA-RuvB-RuvC complex processes Holliday junction (HJ) DNA during genetic recombination and DNA repair, while the RuvA-RuvB complex plays an important role in the rescue of blocked DNA replication forks via replication fork reversal (RFR). RuvA specifically binds to HJ cruciform DNA, conferring on it an open structure. The RuvB hexamer acts as an ATP-dependent pump, pulling dsDNA into and through the RuvAB complex. HJ branch migration allows RuvC to scan DNA until it finds its consensus sequence, where it cleaves and resolves the cruciform DNA. The polypeptide is Holliday junction branch migration complex subunit RuvA (Actinobacillus pleuropneumoniae serotype 5b (strain L20)).